The following is a 674-amino-acid chain: Pentatricopeptide repeat-containing protein At4g17616 (674 aa).

5 PPR repeats span residues 409 to 443 (GSRL…GYPM), 444 to 478 (ELAT…GLIT), 519 to 553 (MLYE…KIPP), 554 to 584 (TVQS…IKRN), and 593 to 627 (TQDL…DMYN).

Belongs to the PPR family. P subfamily.

The chain is Pentatricopeptide repeat-containing protein At4g17616 from Arabidopsis thaliana (Mouse-ear cress).